Reading from the N-terminus, the 131-residue chain is Lymphocyte antigen 6E (131 aa).

Residues 1 to 20 form the signal peptide; the sequence is MKIFLPVLLAALLGVERASS. The UPAR/Ly6 domain maps to 21–101; it reads LMCFSCLNQK…CCQSFLCNFS (81 aa). 5 disulfides stabilise this stretch: Cys23-Cys48, Cys26-Cys35, Cys41-Cys71, Cys75-Cys92, and Cys93-Cys98. N-linked (GlcNAc...) asparagine glycosylation is present at Asn99. The GPI-anchor amidated serine moiety is linked to residue Ser101. The propeptide at 102–131 is removed in mature form; the sequence is AADGGLRASVTLLGAGLLLSLLPALLRFGP.

In terms of assembly, interacts with CHRNA4. Widely expressed, predominantly in liver, kidney, ovary, spleen and peripheral blood Leukocytes.

The protein localises to the cell membrane. Its function is as follows. GPI-anchored cell surface protein that regulates T-lymphocytes proliferation, differentiation, and activation. Regulates the T-cell receptor (TCR) signaling by interacting with component CD3Z/CD247 at the plasma membrane, leading to CD3Z/CD247 phosphorylation modulation. Restricts the entry of human coronaviruses, including SARS-CoV, MERS-CoV and SARS-CoV-2, by interfering with spike protein-mediated membrane fusion. Also plays an essential role in placenta formation by acting as the main receptor for syncytin-A (SynA). Therefore, participates in the normal fusion of syncytiotrophoblast layer I (SynT-I) and in the proper morphogenesis of both fetal and maternal vasculatures within the placenta. May also act as a modulator of nicotinic acetylcholine receptors (nAChRs) activity. (Microbial infection) Promotes entry, likely through an enhanced virus-cell fusion process, of various viruses including HIV-1, West Nile virus, dengue virus and Zika virus. In contrast, the paramyxovirus PIV5, which enters at the plasma membrane, does not require LY6E. Mechanistically, adopts a microtubule-like organization upon viral infection and enhances viral uncoating after endosomal escape. The polypeptide is Lymphocyte antigen 6E (Homo sapiens (Human)).